The sequence spans 364 residues: Mannose-1-phosphate guanylyltransferase catalytic subunit beta (364 aa).

The interval 2 to 220 (KALILVGGYG…PGFWMDVGQP (219 aa)) is substrate-binding domain. GDP-alpha-D-mannose is bound at residue Asp109. Asp109 is a Mg(2+) binding site. Residue Lys160 is part of the active site. Residue Asp216 coordinates GDP-alpha-D-mannose. Asp216 is a Mg(2+) binding site. The hexapeptide repeat domain stretch occupies residues 243–364 (ATGSNIHGTA…VNVPSKDIIM (122 aa)).

This sequence belongs to the transferase hexapeptide repeat family. In terms of assembly, component of the GMPPA-GMPPB mannose-1-phosphate guanylyltransferase complex composed of 4 GMPPA subunits and 8 tag-335/GMPPB subunits; the complex is organized into three layers, a central layer made up of 2 GMPPA dimers sandwiched between two layers each made up of 2 tag-335/GMPPB dimers. Catalytic activity of tag-335/GMPPB is reduced when part of the complex and binding of GDP-alpha-D-Mannose by GMPPA induces allosteric feedback inhibition of tag-335/GMPPB. Requires Mg(2+) as cofactor.

The enzyme catalyses alpha-D-mannose 1-phosphate + GTP + H(+) = GDP-alpha-D-mannose + diphosphate. It participates in nucleotide-sugar biosynthesis; GDP-alpha-D-mannose biosynthesis; GDP-alpha-D-mannose from alpha-D-mannose 1-phosphate (GTP route): step 1/1. With respect to regulation, enzyme activity is reduced by incorporation into the GMPPA-GMPPB mannose-1-phosphate guanylyltransferase complex. Allosterically inhibited, when part of the GMPPA-GMPPB complex, by GDP-alpha-D-mannose binding to GMPPA. Its function is as follows. Catalytic subunit of the GMPPA-GMPPB mannose-1-phosphate guanylyltransferase complex. Catalyzes the formation of GDP-mannose, an essential precursor of glycan moieties of glycoproteins and glycolipids. Can catalyze the reverse reaction in vitro. Together with GMPPA regulates GDP-alpha-D-mannose levels. This is Mannose-1-phosphate guanylyltransferase catalytic subunit beta from Caenorhabditis briggsae.